The primary structure comprises 316 residues: tRNA selenocysteine 1-associated protein 1-like (316 aa).

RRM domains follow at residues 6–89 and 99–178; these read TSLW…YATY and FSVF…IAVN. The span at 239-248 shows a compositional bias: pro residues; sequence PPMGMPPMPP. Positions 239 to 285 are disordered; sequence PPMGMPPMPPDMQGSTEAHDGTEEVEEDPSEDPNPQVDVEELNRQYM.

Belongs to the RRM TRSPAP family.

It is found in the nucleus. It localises to the cytoplasm. In terms of biological role, involved in the early steps of selenocysteine biosynthesis and tRNA(Sec) charging to the later steps resulting in the cotranslational incorporation of selenocysteine into selenoproteins. This Danio rerio (Zebrafish) protein is tRNA selenocysteine 1-associated protein 1-like (trnau1apl).